Here is a 325-residue protein sequence, read N- to C-terminus: NADH-cytochrome b5 reductase 2 (325 aa).

Residues 32 to 48 (VPLYGGLALAAGGAYYY) traverse the membrane as a helical segment. The FAD-binding FR-type domain occupies 74-179 (QGWVDLKLAG…KGPIPKYPWE (106 aa)). An FAD-binding site is contributed by 182-217 (KHDHICMIAGGTGITPMYQIIRKIFNNPNDKTKVTL).

The protein belongs to the flavoprotein pyridine nucleotide cytochrome reductase family. It depends on FAD as a cofactor.

The protein localises to the mitochondrion outer membrane. It carries out the reaction 2 Fe(III)-[cytochrome b5] + NADH = 2 Fe(II)-[cytochrome b5] + NAD(+) + H(+). In terms of biological role, may mediate the reduction of outer membrane cytochrome b5. This Coccidioides immitis (strain RS) (Valley fever fungus) protein is NADH-cytochrome b5 reductase 2 (MCR1).